The following is a 590-amino-acid chain: NADH-ubiquinone oxidoreductase chain 5 (590 aa).

18 helical membrane passes run 1 to 21 (MFLI…SFMF), 28 to 48 (FWLS…SFLM), 58 to 78 (YYDF…TYVC), 81 to 101 (FYMF…FYAF), 113 to 133 (FLII…SYDF), 136 to 156 (AYCG…YFWY), 176 to 198 (VLLI…TFYF), 245 to 265 (ALIH…FVYW), 273 to 293 (YFYN…LCVF), 310 to 330 (ISFS…LFFC), 333 to 353 (MFYK…FFGL), 372 to 392 (LLLI…GFYC), 395 to 415 (MLLA…LFIS), 428 to 450 (FLLF…FLLF), 461 to 481 (ISLY…CIFV), 501 to 521 (IAIF…GCLF), 536 to 556 (IFFV…YFVC), and 568 to 588 (FVIY…LWIL).

This sequence belongs to the complex I subunit 5 family.

It is found in the mitochondrion inner membrane. It catalyses the reaction a ubiquinone + NADH + 5 H(+)(in) = a ubiquinol + NAD(+) + 4 H(+)(out). Its function is as follows. Core subunit of the mitochondrial membrane respiratory chain NADH dehydrogenase (Complex I) that is believed to belong to the minimal assembly required for catalysis. Complex I functions in the transfer of electrons from NADH to the respiratory chain. The immediate electron acceptor for the enzyme is believed to be ubiquinone. This chain is NADH-ubiquinone oxidoreductase chain 5 (ND5), found in Trypanosoma brucei brucei.